Consider the following 27-residue polypeptide: Secretin (27 aa).

A Methionine amide modification is found at Met27.

Belongs to the glucagon family.

The protein resides in the secreted. Hormone involved in different processes, such as regulation of the pH of the duodenal content, food intake and water homeostasis. Exerts its biological effects by binding to secretin receptor (SCTR), a G-protein coupled receptor expressed in the basolateral domain of several cells. This is Secretin from Gallus gallus (Chicken).